A 277-amino-acid chain; its full sequence is Diaminopimelate epimerase (277 aa).

Positions 13, 46, and 66 each coordinate substrate. The active-site Proton donor is Cys-75. Substrate is bound by residues 76-77 (GN), Asn-160, Asn-193, and 211-212 (ER). Cys-220 functions as the Proton acceptor in the catalytic mechanism. Position 221–222 (221–222 (GS)) interacts with substrate.

It belongs to the diaminopimelate epimerase family. As to quaternary structure, homodimer.

The protein localises to the cytoplasm. The catalysed reaction is (2S,6S)-2,6-diaminopimelate = meso-2,6-diaminopimelate. It functions in the pathway amino-acid biosynthesis; L-lysine biosynthesis via DAP pathway; DL-2,6-diaminopimelate from LL-2,6-diaminopimelate: step 1/1. Functionally, catalyzes the stereoinversion of LL-2,6-diaminopimelate (L,L-DAP) to meso-diaminopimelate (meso-DAP), a precursor of L-lysine and an essential component of the bacterial peptidoglycan. The protein is Diaminopimelate epimerase of Legionella pneumophila (strain Corby).